Reading from the N-terminus, the 362-residue chain is tRNA-specific 2-thiouridylase MnmA (362 aa).

ATP is bound by residues 9-16 and Met-35; that span reads GMSGGVDS. Positions 95–97 are interaction with target base in tRNA; sequence NPD. The active-site Nucleophile is Cys-100. Cys-100 and Cys-197 are oxidised to a cystine. Gly-124 contributes to the ATP binding site. An interaction with tRNA region spans residues 147–149; sequence KDQ. Cys-197 acts as the Cysteine persulfide intermediate in catalysis. Positions 309 to 310 are interaction with tRNA; the sequence is RY.

Belongs to the MnmA/TRMU family.

It is found in the cytoplasm. The catalysed reaction is S-sulfanyl-L-cysteinyl-[protein] + uridine(34) in tRNA + AH2 + ATP = 2-thiouridine(34) in tRNA + L-cysteinyl-[protein] + A + AMP + diphosphate + H(+). Functionally, catalyzes the 2-thiolation of uridine at the wobble position (U34) of tRNA, leading to the formation of s(2)U34. This is tRNA-specific 2-thiouridylase MnmA from Cupriavidus pinatubonensis (strain JMP 134 / LMG 1197) (Cupriavidus necator (strain JMP 134)).